The chain runs to 488 residues: Inositol 1,3,4-trisphosphate 5/6-kinase 4 (488 aa).

2 residues coordinate 1D-myo-inositol 1,3,4-trisphosphate: K208 and K224. Residues 246–488 (NACAIVDPIR…RFDQHVQEKH (243 aa)) form the ATP-grasp domain. R263 and K315 together coordinate ATP. Residues H326 and K360 each contribute to the 1D-myo-inositol 1,3,4-trisphosphate site. Residues 349–360 (QEYVDHSSRIFK), S375, and S398 contribute to the ATP site. 3 residues coordinate Mg(2+): D439, D453, and N455. Positions 455 and 459 each coordinate 1D-myo-inositol 1,3,4-trisphosphate.

Belongs to the ITPK1 family. As to quaternary structure, monomer. Requires Mg(2+) as cofactor. In terms of tissue distribution, expressed in roots, leaf vasculature, cauline leaves, flower buds and siliques.

The catalysed reaction is 1D-myo-inositol 1,3,4-trisphosphate + ATP = 1D-myo-inositol 1,3,4,5-tetrakisphosphate + ADP + H(+). It catalyses the reaction 1D-myo-inositol 1,3,4-trisphosphate + ATP = 1D-myo-inositol 1,3,4,6-tetrakisphosphate + ADP + H(+). In terms of biological role, kinase that can phosphorylate the inositol polyphosphate Ins(1,3,4)P3 to form InsP4. Also phosphorylates a racemic mixture of Ins(1,4,6)P3 and Ins(3,4,6)P3 to form InsP4. Does not display inositol 3,4,5,6-tetrakisphosphate 1-kinase activity, but possesses inositol 1,4,5,6-tetrakisphosphate and inositol 1,3,4,5-tetrakisphosphate isomerase activity. Ins(1,3,4,6)P4 is an essential molecule in the hexakisphosphate (InsP6) pathway. The sequence is that of Inositol 1,3,4-trisphosphate 5/6-kinase 4 (ITPK4) from Arabidopsis thaliana (Mouse-ear cress).